Reading from the N-terminus, the 757-residue chain is Protein aardvark (757 aa).

Disordered stretches follow at residues 39-63 (SSINNNINNNNNNNNNNNSNNDSNN), 122-166 (LEEN…SSIL), and 256-285 (SSNGSTNNHNNNNNNNHHHHSNNGNLIESS). Residues 121–205 (ILEENNNNNN…FNQFNFLEGI (85 aa)) are a coiled coil. Composition is skewed to low complexity over residues 125–164 (NNNNNNNNNNNNNNNNNNNNNNNNNNNNNNNNNSSSSSSS) and 256–270 (SSNGSTNNHNNNNNN). The region spanning 310–356 (QFDIFLIPTEMLVHLLSFLSANDLWRISLTCKRIWYIVDVFKFWELL) is the F-box domain. 6 ARM repeats span residues 454 to 498 (GGIS…SNDN), 506 to 548 (GGIQ…VAIE), 549 to 591 (GGIQ…SAKE), 592 to 634 (GGIG…ISRQ), 635 to 678 (NGIQ…IARE), and 679 to 723 (GGIN…RSGG).

Belongs to the beta-catenin family.

The protein resides in the cytoplasm. It localises to the cell junction. In terms of biological role, required to regulate pattern formation during multi-cellular stages of development and for the formation of adherens junctions. Plays a structural role during the regulation of stalk formation. Involved in cell signaling. Required for spore-cell differentiation. Overexpression increases number and size of cell junctions and reduces spore-cell formation. The protein is Protein aardvark (aarA) of Dictyostelium discoideum (Social amoeba).